A 361-amino-acid chain; its full sequence is Dual specificity mitogen-activated protein kinase kinase 6 (361 aa).

Basic and acidic residues-rich tracts occupy residues 1-11 (MEGGSDKESKV) and 37-48 (PKELKLPKEVFE). Residues 1-61 (MEGGSDKESK…PAPTPPRDLD (61 aa)) are disordered. Residues 30-46 (VRGKKKLPKELKLPKEV) are d domain. Residues 80-341 (LEQIGELGRG…YTELMQHPFF (262 aa)) form the Protein kinase domain. ATP-binding positions include 86-94 (LGRGAYGVV) and Lys-109. Catalysis depends on Asp-206, which acts as the Proton acceptor. Ser-234 carries the post-translational modification Phosphoserine; by MAPK3. Phosphothreonine; by MAPK3 is present on Thr-238. The segment at 338 to 361 (HPFFTLHDSKDTDVASFVKTILGD) is DVD domain.

Belongs to the protein kinase superfamily. STE Ser/Thr protein kinase family. MAP kinase kinase subfamily. In terms of assembly, dimer. Interacts (via its D domain) with its MAP kinase substrates. Interacts (via its DVD domain) with MAP3Ks activators. Post-translationally, weakly autophosphorylated. Phosphorylated at Ser-234 and Thr-238 by the majority of M3Ks.

The protein resides in the nucleus. It is found in the cytoplasm. The protein localises to the cytoskeleton. The catalysed reaction is L-seryl-[protein] + ATP = O-phospho-L-seryl-[protein] + ADP + H(+). It carries out the reaction L-threonyl-[protein] + ATP = O-phospho-L-threonyl-[protein] + ADP + H(+). It catalyses the reaction L-tyrosyl-[protein] + ATP = O-phospho-L-tyrosyl-[protein] + ADP + H(+). Activated by dual phosphorylation on Ser-234 and Thr-238 in response to a variety of cellular stresses, including UV radiation, osmotic shock, hypoxia, inflammatory cytokines, interferon gamma (IFNG), and less often by growth factors. MAP2K6/MKK6 is activated by the majority of M3Ks. Functionally, dual specificity protein kinase which acts as an essential component of the MAP kinase signal transduction pathway. Catalyzes the concomitant phosphorylation of a threonine and a tyrosine residue in the MAP kinases p38 and plays an important role in the regulation of cellular responses to cytokines and all kinds of stresses. The p38 MAP kinase signal transduction pathway leads to direct activation of transcription factors. Phosphorylation by MAP2K6 asymmetrically activates p38 on one side of the blastodisc, an event which is necessary for blastomere cleavage. In Danio rerio (Zebrafish), this protein is Dual specificity mitogen-activated protein kinase kinase 6.